Here is a 450-residue protein sequence, read N- to C-terminus: GTPase Der (450 aa).

2 consecutive EngA-type G domains span residues 3 to 170 (PTIA…LATG) and 183 to 356 (LKIA…AECS). GTP contacts are provided by residues 9-16 (GRPNVGKS), 56-60 (DTGGL), 122-125 (NKVD), 189-196 (GRPNAGKS), 236-240 (DTAGV), and 301-304 (NKID). Residues 357–441 (LRISTGQLNR…PLNIVFRSTF (85 aa)) form the KH-like domain.

Belongs to the TRAFAC class TrmE-Era-EngA-EngB-Septin-like GTPase superfamily. EngA (Der) GTPase family. As to quaternary structure, associates with the 50S ribosomal subunit.

In terms of biological role, GTPase that plays an essential role in the late steps of ribosome biogenesis. This chain is GTPase Der, found in Maridesulfovibrio salexigens (strain ATCC 14822 / DSM 2638 / NCIMB 8403 / VKM B-1763) (Desulfovibrio salexigens).